The sequence spans 183 residues: uncharacterized protein (183 aa).

Residue Lys21 forms a Glycyl lysine isopeptide (Lys-Gly) (interchain with G-Cter in ubiquitin) linkage. Disordered stretches follow at residues 24–111 (NTTT…QNDN) and 160–183 (PQSILDRSRTLPPSNASNTTTRRP). The segment covering 99 to 108 (QQQQQQQQQQ) has biased composition (low complexity). Polar residues predominate over residues 170–183 (LPPSNASNTTTRRP).

It localises to the cytoplasm. This is an uncharacterized protein from Saccharomyces cerevisiae (strain ATCC 204508 / S288c) (Baker's yeast).